The following is a 136-amino-acid chain: Small ribosomal subunit protein eS17B (136 aa).

The protein belongs to the eukaryotic ribosomal protein eS17 family. As to quaternary structure, component of the small ribosomal subunit (SSU). Mature yeast ribosomes consist of a small (40S) and a large (60S) subunit. The 40S small subunit contains 1 molecule of ribosomal RNA (18S rRNA) and 33 different proteins (encoded by 57 genes). The large 60S subunit contains 3 rRNA molecules (25S, 5.8S and 5S rRNA) and 46 different proteins (encoded by 81 genes).

It is found in the cytoplasm. In terms of biological role, component of the ribosome, a large ribonucleoprotein complex responsible for the synthesis of proteins in the cell. The small ribosomal subunit (SSU) binds messenger RNAs (mRNAs) and translates the encoded message by selecting cognate aminoacyl-transfer RNA (tRNA) molecules. The large subunit (LSU) contains the ribosomal catalytic site termed the peptidyl transferase center (PTC), which catalyzes the formation of peptide bonds, thereby polymerizing the amino acids delivered by tRNAs into a polypeptide chain. The nascent polypeptides leave the ribosome through a tunnel in the LSU and interact with protein factors that function in enzymatic processing, targeting, and the membrane insertion of nascent chains at the exit of the ribosomal tunnel. This Saccharomyces cerevisiae (strain ATCC 204508 / S288c) (Baker's yeast) protein is Small ribosomal subunit protein eS17B.